Consider the following 61-residue polypeptide: Potassium channel toxin alpha-KTx 3.18 (61 aa).

A signal peptide spans 1–23; sequence MKMFFTVLVTLFVCSMIIGICEG. Cystine bridges form between C30–C50, C36–C55, and C40–C57. A Lysine amide modification is found at K60.

In terms of tissue distribution, expressed by the venom gland.

The protein resides in the secreted. Functionally, inhibits voltage-gated potassium channel rKv1.1/KCNA1 at nanomolar ranges (IC(50)=90 +-2 nM, reduction of current by 30% at 50 nM or toxin). In Mesobuthus eupeus (Lesser Asian scorpion), this protein is Potassium channel toxin alpha-KTx 3.18.